Reading from the N-terminus, the 119-residue chain is Large ribosomal subunit protein uL22 (119 aa).

This sequence belongs to the universal ribosomal protein uL22 family. Part of the 50S ribosomal subunit.

In terms of biological role, this protein binds specifically to 23S rRNA; its binding is stimulated by other ribosomal proteins, e.g. L4, L17, and L20. It is important during the early stages of 50S assembly. It makes multiple contacts with different domains of the 23S rRNA in the assembled 50S subunit and ribosome. The globular domain of the protein is located near the polypeptide exit tunnel on the outside of the subunit, while an extended beta-hairpin is found that lines the wall of the exit tunnel in the center of the 70S ribosome. In Bifidobacterium adolescentis (strain ATCC 15703 / DSM 20083 / NCTC 11814 / E194a), this protein is Large ribosomal subunit protein uL22.